Reading from the N-terminus, the 358-residue chain is D-alanine--D-alanine ligase (358 aa).

Positions 136–341 constitute an ATP-grasp domain; that stretch reads KYILQAAGVP…YGDLIEELIQ (206 aa). 169–224 contributes to the ATP binding site; the sequence is EGSLLYPMFVKPANMGSSVGISKAENREELQNALALAYQYDSRAIVEQGIEAREIE. Mg(2+) contacts are provided by Asp295, Glu308, and Asn310.

This sequence belongs to the D-alanine--D-alanine ligase family. Requires Mg(2+) as cofactor. Mn(2+) serves as cofactor.

It is found in the cytoplasm. The catalysed reaction is 2 D-alanine + ATP = D-alanyl-D-alanine + ADP + phosphate + H(+). It participates in cell wall biogenesis; peptidoglycan biosynthesis. In terms of biological role, cell wall formation. The sequence is that of D-alanine--D-alanine ligase from Enterococcus hirae (strain ATCC 9790 / DSM 20160 / JCM 8729 / LMG 6399 / NBRC 3181 / NCIMB 6459 / NCDO 1258 / NCTC 12367 / WDCM 00089 / R).